Consider the following 341-residue polypeptide: Glycerol-3-phosphate dehydrogenase [NAD(P)+] (341 aa).

Residues Ser-14, Phe-15, Arg-35, and Lys-108 each coordinate NADPH. Sn-glycerol 3-phosphate is bound by residues Lys-108 and Gly-136. Ala-140 lines the NADPH pocket. Lys-191, Asp-244, Ser-254, Arg-255, and Asn-256 together coordinate sn-glycerol 3-phosphate. Residue Lys-191 is the Proton acceptor of the active site. Arg-255 contacts NADPH. NADPH-binding residues include Val-279 and Glu-281.

Belongs to the NAD-dependent glycerol-3-phosphate dehydrogenase family.

The protein resides in the cytoplasm. The enzyme catalyses sn-glycerol 3-phosphate + NAD(+) = dihydroxyacetone phosphate + NADH + H(+). It catalyses the reaction sn-glycerol 3-phosphate + NADP(+) = dihydroxyacetone phosphate + NADPH + H(+). It functions in the pathway membrane lipid metabolism; glycerophospholipid metabolism. Catalyzes the reduction of the glycolytic intermediate dihydroxyacetone phosphate (DHAP) to sn-glycerol 3-phosphate (G3P), the key precursor for phospholipid synthesis. This is Glycerol-3-phosphate dehydrogenase [NAD(P)+] from Pseudomonas syringae pv. syringae (strain B728a).